Reading from the N-terminus, the 267-residue chain is NLP effector protein 6 (267 aa).

Positions 1–35 (MRTTSPYSHCSHVEMNAGAFVTMLLVALSVCVAAA) are cleaved as a signal peptide. Asn114 carries an N-linked (GlcNAc...) asparagine glycan. The short motif at 117–127 (AIMYAWYFPKR) is the Conserved undecapeptide motif element. The Conserved heptapeptide motif motif lies at 134 to 140 (IQRHDWK). Asn192 carries an N-linked (GlcNAc...) asparagine glycan.

It belongs to the Necrosis inducing protein (NPP1) family.

The protein resides in the secreted. Its function is as follows. Probable secreted effector that may act as a pathogen-associated molecular pattern (PAMP) recognized by the plant immune system. The chain is NLP effector protein 6 from Plasmopara viticola (Downy mildew of grapevine).